The chain runs to 100 residues: NADH-quinone oxidoreductase subunit K (100 aa).

Helical transmembrane passes span 4-24 (LSHG…GMII), 28-48 (LLFM…AFVV), and 60-80 (VMYI…LALL).

This sequence belongs to the complex I subunit 4L family. In terms of assembly, NDH-1 is composed of 13 different subunits. Subunits NuoA, H, J, K, L, M, N constitute the membrane sector of the complex.

The protein localises to the cell inner membrane. The catalysed reaction is a quinone + NADH + 5 H(+)(in) = a quinol + NAD(+) + 4 H(+)(out). Its function is as follows. NDH-1 shuttles electrons from NADH, via FMN and iron-sulfur (Fe-S) centers, to quinones in the respiratory chain. The immediate electron acceptor for the enzyme in this species is believed to be ubiquinone. Couples the redox reaction to proton translocation (for every two electrons transferred, four hydrogen ions are translocated across the cytoplasmic membrane), and thus conserves the redox energy in a proton gradient. The chain is NADH-quinone oxidoreductase subunit K from Sodalis glossinidius (strain morsitans).